A 235-amino-acid chain; its full sequence is Large ribosomal subunit protein uL1 (235 aa).

The protein belongs to the universal ribosomal protein uL1 family. As to quaternary structure, part of the 50S ribosomal subunit.

Functionally, binds directly to 23S rRNA. The L1 stalk is quite mobile in the ribosome, and is involved in E site tRNA release. In terms of biological role, protein L1 is also a translational repressor protein, it controls the translation of the L11 operon by binding to its mRNA. The polypeptide is Large ribosomal subunit protein uL1 (Prochlorococcus marinus (strain MIT 9301)).